The following is a 190-amino-acid chain: Biphenyl-2,3-diol 1,2-dioxygenase 3 (190 aa).

A VOC domain is found at 6-125; sequence RLAHFVLQTN…DGNMVELQID (120 aa). His-9, His-73, and Glu-121 together coordinate Fe cation.

It belongs to the extradiol ring-cleavage dioxygenase family. In terms of assembly, homohexamer. The cofactor is Fe(2+).

It catalyses the reaction biphenyl-2,3-diol + O2 = 2-hydroxy-6-oxo-6-phenylhexa-2,4-dienoate + H(+). Its pathway is xenobiotic degradation; biphenyl degradation; 2-hydroxy-2,4-pentadienoate and benzoate from biphenyl: step 3/4. The chain is Biphenyl-2,3-diol 1,2-dioxygenase 3 (bphC3) from Rhodococcus globerulus.